Here is a 66-residue protein sequence, read N- to C-terminus: Large ribosomal subunit protein uL29 (66 aa).

This sequence belongs to the universal ribosomal protein uL29 family.

This is Large ribosomal subunit protein uL29 from Rhizobium etli (strain CIAT 652).